Consider the following 122-residue polypeptide: MKTSRKITTQRRHRRIRRKVFGTAERPRLAVFRSHRHIYAQVIDDVAQHTLASASTLDRELREKFKETGTATQEAAALVGRSVAERALQMGISRVVFDRGGKLYHGRVQALAEAAREAGLQF.

Belongs to the universal ribosomal protein uL18 family. Part of the 50S ribosomal subunit; part of the 5S rRNA/L5/L18/L25 subcomplex. Contacts the 5S and 23S rRNAs.

This is one of the proteins that bind and probably mediate the attachment of the 5S RNA into the large ribosomal subunit, where it forms part of the central protuberance. The protein is Large ribosomal subunit protein uL18 of Synechococcus sp. (strain JA-2-3B'a(2-13)) (Cyanobacteria bacterium Yellowstone B-Prime).